A 481-amino-acid chain; its full sequence is Argininosuccinate synthase (481 aa).

ATP contacts are provided by residues 17-25 and alanine 43; that span reads AFSGGLDTS. An L-citrulline-binding site is contributed by tyrosine 99. Residues glycine 129 and threonine 131 each coordinate ATP. L-aspartate-binding residues include threonine 131, asparagine 135, and aspartate 136. An L-citrulline-binding site is contributed by asparagine 135. Aspartate 136 lines the ATP pocket. The L-citrulline site is built by arginine 139 and serine 192. Aspartate 194 is an ATP binding site. Positions 201, 203, and 280 each coordinate L-citrulline.

It belongs to the argininosuccinate synthase family. Type 2 subfamily. As to quaternary structure, homotetramer.

It localises to the cytoplasm. The enzyme catalyses L-citrulline + L-aspartate + ATP = 2-(N(omega)-L-arginino)succinate + AMP + diphosphate + H(+). It functions in the pathway amino-acid biosynthesis; L-arginine biosynthesis; L-arginine from L-ornithine and carbamoyl phosphate: step 2/3. In Streptomyces coelicolor (strain ATCC BAA-471 / A3(2) / M145), this protein is Argininosuccinate synthase (argG).